A 193-amino-acid polypeptide reads, in one-letter code: Large ribosomal subunit protein uL11 (193 aa).

The protein belongs to the universal ribosomal protein uL11 family. Part of the ribosomal stalk of the 50S ribosomal subunit. Interacts with L10 and the large rRNA to form the base of the stalk. L10 forms an elongated spine to which L12 dimers bind in a sequential fashion forming a multimeric L10(L12)X complex. One or more lysine residues are methylated.

Functionally, forms part of the ribosomal stalk which helps the ribosome interact with GTP-bound translation factors. The polypeptide is Large ribosomal subunit protein uL11 (Mycoplasmopsis synoviae (strain 53) (Mycoplasma synoviae)).